The chain runs to 47 residues: Delta-actitoxin-Ael1b (47 aa).

3 disulfide bridges follow: Cys4-Cys44, Cys6-Cys34, and Cys27-Cys45.

The protein belongs to the sea anemone sodium channel inhibitory toxin family. Type I subfamily.

The protein resides in the secreted. It is found in the nematocyst. In terms of biological role, produces a positive inotropic effect in mammalian heart muscle. Modifies current passing through the fast sodium channel (Nav) in neuroblastoma cells, leading to delayed and incomplete inactivation. Paralyzes the shore crab (C.maenas) by tetanic contractions after intramuscular injection. The polypeptide is Delta-actitoxin-Ael1b (Anthopleura elegantissima (Green aggregating anemone)).